A 562-amino-acid polypeptide reads, in one-letter code: Formate--tetrahydrofolate ligase (562 aa).

71-78 (TPAGEGKS) serves as a coordination point for ATP.

It belongs to the formate--tetrahydrofolate ligase family.

It carries out the reaction (6S)-5,6,7,8-tetrahydrofolate + formate + ATP = (6R)-10-formyltetrahydrofolate + ADP + phosphate. The protein operates within one-carbon metabolism; tetrahydrofolate interconversion. The polypeptide is Formate--tetrahydrofolate ligase (Bacillus cereus (strain ATCC 10987 / NRS 248)).